A 286-amino-acid polypeptide reads, in one-letter code: uncharacterized protein (286 aa).

The protein belongs to the NmrA-type oxidoreductase family.

This is an uncharacterized protein from Bacillus subtilis (strain 168).